The following is a 122-amino-acid chain: uncharacterized protein (122 aa).

The Cytoplasmic segment spans residues 1–24 (MKNRKFSNLLLLRLRILCFNKKPA). A helical transmembrane segment spans residues 25–45 (FAATSYAFFFRNFSVLIFIMV). Residues 46 to 57 (PDEKENGAAADN) are Extracellular-facing. The helical transmembrane segment at 58-78 (SFSLLIGRGVVLFLFYCPTAL) threads the bilayer. The Cytoplasmic segment spans residues 79–122 (KMHGPVPAHWFCDKNIEAIQSDGQIRLLRSGPFPWSHGTCIRGA).

The protein resides in the membrane. This is an uncharacterized protein from Saccharomyces cerevisiae (strain ATCC 204508 / S288c) (Baker's yeast).